The primary structure comprises 150 residues: Cytochrome c oxidase subunit 5A, mitochondrial (150 aa).

A mitochondrion-targeting transit peptide spans 1–41 (MLGAALRRCAVAATSRAGPRGLLHSAPNPGPAAAIQSVRCY). An SIFI-degron motif is present at residues 2-17 (LGAALRRCAVAATSRA). Residues Lys-87 and Lys-113 each carry the N6-acetyllysine modification. Thr-141 bears the Phosphothreonine mark.

This sequence belongs to the cytochrome c oxidase subunit 5A family. Component of the cytochrome c oxidase (complex IV, CIV), a multisubunit enzyme composed of 14 subunits. The complex is composed of a catalytic core of 3 subunits MT-CO1, MT-CO2 and MT-CO3, encoded in the mitochondrial DNA, and 11 supernumerary subunits COX4I, COX5A, COX5B, COX6A, COX6B, COX6C, COX7A, COX7B, COX7C, COX8 and NDUFA4, which are encoded in the nuclear genome. The complex exists as a monomer or a dimer and forms supercomplexes (SCs) in the inner mitochondrial membrane with NADH-ubiquinone oxidoreductase (complex I, CI) and ubiquinol-cytochrome c oxidoreductase (cytochrome b-c1 complex, complex III, CIII), resulting in different assemblies (supercomplex SCI(1)III(2)IV(1) and megacomplex MCI(2)III(2)IV(2)). Interacts with AFG1L. Interacts with RAB5IF. In terms of processing, in response to mitochondrial stress, the precursor protein is ubiquitinated by the SIFI complex in the cytoplasm before mitochondrial import, leading to its degradation. Within the SIFI complex, UBR4 initiates ubiquitin chain that are further elongated or branched by KCMF1.

The protein resides in the mitochondrion inner membrane. Its pathway is energy metabolism; oxidative phosphorylation. Component of the cytochrome c oxidase, the last enzyme in the mitochondrial electron transport chain which drives oxidative phosphorylation. The respiratory chain contains 3 multisubunit complexes succinate dehydrogenase (complex II, CII), ubiquinol-cytochrome c oxidoreductase (cytochrome b-c1 complex, complex III, CIII) and cytochrome c oxidase (complex IV, CIV), that cooperate to transfer electrons derived from NADH and succinate to molecular oxygen, creating an electrochemical gradient over the inner membrane that drives transmembrane transport and the ATP synthase. Cytochrome c oxidase is the component of the respiratory chain that catalyzes the reduction of oxygen to water. Electrons originating from reduced cytochrome c in the intermembrane space (IMS) are transferred via the dinuclear copper A center (CU(A)) of subunit 2 and heme A of subunit 1 to the active site in subunit 1, a binuclear center (BNC) formed by heme A3 and copper B (CU(B)). The BNC reduces molecular oxygen to 2 water molecules using 4 electrons from cytochrome c in the IMS and 4 protons from the mitochondrial matrix. This Saguinus labiatus (Red-chested mustached tamarin) protein is Cytochrome c oxidase subunit 5A, mitochondrial (COX5A).